Here is a 436-residue protein sequence, read N- to C-terminus: Citrate synthase (436 aa).

Active-site residues include H311 and D370.

The protein belongs to the citrate synthase family. Homohexamer.

It carries out the reaction oxaloacetate + acetyl-CoA + H2O = citrate + CoA + H(+). The protein operates within carbohydrate metabolism; tricarboxylic acid cycle; isocitrate from oxaloacetate: step 1/2. With respect to regulation, allosterically inhibited by NADH. The protein is Citrate synthase (gltA) of Rickettsia prowazekii (strain Madrid E).